The primary structure comprises 61 residues: UPF0434 protein Pput_3813 (61 aa).

This sequence belongs to the UPF0434 family.

In Pseudomonas putida (strain ATCC 700007 / DSM 6899 / JCM 31910 / BCRC 17059 / LMG 24140 / F1), this protein is UPF0434 protein Pput_3813.